The primary structure comprises 217 residues: 3,4-dihydroxy-2-butanone 4-phosphate synthase (217 aa).

D-ribulose 5-phosphate-binding positions include 37–38, Asp-42, 150–154, and Glu-174; these read RE and RGGHT. Glu-38 serves as a coordination point for Mg(2+). His-153 contributes to the Mg(2+) binding site.

The protein belongs to the DHBP synthase family. As to quaternary structure, homodimer. Mg(2+) is required as a cofactor. The cofactor is Mn(2+).

The enzyme catalyses D-ribulose 5-phosphate = (2S)-2-hydroxy-3-oxobutyl phosphate + formate + H(+). It participates in cofactor biosynthesis; riboflavin biosynthesis; 2-hydroxy-3-oxobutyl phosphate from D-ribulose 5-phosphate: step 1/1. Its function is as follows. Catalyzes the conversion of D-ribulose 5-phosphate to formate and 3,4-dihydroxy-2-butanone 4-phosphate. The protein is 3,4-dihydroxy-2-butanone 4-phosphate synthase of Proteus mirabilis (strain HI4320).